Reading from the N-terminus, the 97-residue chain is Large ribosomal subunit protein bL28 (97 aa).

This sequence belongs to the bacterial ribosomal protein bL28 family.

The sequence is that of Large ribosomal subunit protein bL28 from Rickettsia peacockii (strain Rustic).